A 359-amino-acid polypeptide reads, in one-letter code: MNIYEQLQAVEDRYEELGELLSDPDVVSDTKRFMDLSKEEASTRDTVTAYREYKKVLQNITDAEEMIKDASGDADLEEMAKQELKDAKAEKEEYEEKLKILLLPKDPNDDKNIILEIRGAAGGDEAQLFAGDLLQMYQKYAESQGWRFEVMEASYNGVGGIKEVVAMVSGQSVYSKLKYESGAHRVQRVPVTESQGRVHTSTATVLVMPEIEEVEYDIDPKDLRVDIYHASGAGGQNVNKVATAVRIVHLPTNIKVEMQEERTQQKNRDKAMKIIRARVADHFAQIAQDEQDAERKSTIGTGDRSERIRTYNFPQNRVTDHRIGLTLQKLDTILAGKLDEVVDALVLYDQTQKLEELNK.

Gln236 bears the N5-methylglutamine mark. Residues 288–307 form a disordered region; that stretch reads QDEQDAERKSTIGTGDRSER. Residues 293–307 show a composition bias toward basic and acidic residues; it reads AERKSTIGTGDRSER.

Belongs to the prokaryotic/mitochondrial release factor family. In terms of processing, methylated by PrmC. Methylation increases the termination efficiency of RF1.

The protein resides in the cytoplasm. Its function is as follows. Peptide chain release factor 1 directs the termination of translation in response to the peptide chain termination codons UAG and UAA. This is Peptide chain release factor 1 from Streptococcus sanguinis (strain SK36).